An 873-amino-acid polypeptide reads, in one-letter code: Polyribonucleotide nucleotidyltransferase (873 aa).

Positions 521 and 527 each coordinate Mg(2+). In terms of domain architecture, KH spans 587–646 (PRIITTTVPVDKIGEVIGPKGKMINQIQEDTGAEIAIEDDGTVYISSEGGEAAEKAKQII). Residues 658–730 (GETYKGTVVK…DRGKISLAIP (73 aa)) enclose the S1 motif domain. Residues 727–873 (LAIPGFENQE…VRRDFDPFDD (147 aa)) form a disordered region. Residues 742–857 (RRSDDRPRRD…EYREGREVRH (116 aa)) are compositionally biased toward basic and acidic residues.

Belongs to the polyribonucleotide nucleotidyltransferase family. Mg(2+) serves as cofactor.

The protein localises to the cytoplasm. It carries out the reaction RNA(n+1) + phosphate = RNA(n) + a ribonucleoside 5'-diphosphate. Its function is as follows. Involved in mRNA degradation. Catalyzes the phosphorolysis of single-stranded polyribonucleotides processively in the 3'- to 5'-direction. In Bifidobacterium animalis subsp. lactis (strain AD011), this protein is Polyribonucleotide nucleotidyltransferase.